Here is a 425-residue protein sequence, read N- to C-terminus: UDP-N-acetylglucosamine 1-carboxyvinyltransferase (425 aa).

23–24 serves as a coordination point for phosphoenolpyruvate; the sequence is KN. Residue R100 participates in UDP-N-acetyl-alpha-D-glucosamine binding. C124 serves as the catalytic Proton donor. A 2-(S-cysteinyl)pyruvic acid O-phosphothioketal modification is found at C124. UDP-N-acetyl-alpha-D-glucosamine contacts are provided by D313 and I335.

This sequence belongs to the EPSP synthase family. MurA subfamily.

Its subcellular location is the cytoplasm. It catalyses the reaction phosphoenolpyruvate + UDP-N-acetyl-alpha-D-glucosamine = UDP-N-acetyl-3-O-(1-carboxyvinyl)-alpha-D-glucosamine + phosphate. It participates in cell wall biogenesis; peptidoglycan biosynthesis. Its function is as follows. Cell wall formation. Adds enolpyruvyl to UDP-N-acetylglucosamine. In Wolbachia sp. subsp. Drosophila simulans (strain wRi), this protein is UDP-N-acetylglucosamine 1-carboxyvinyltransferase.